Consider the following 616-residue polypeptide: Dihydroxy-acid dehydratase (616 aa).

Aspartate 81 is a binding site for Mg(2+). Cysteine 122 contributes to the [2Fe-2S] cluster binding site. Aspartate 123 and lysine 124 together coordinate Mg(2+). At lysine 124 the chain carries N6-carboxylysine. Cysteine 195 lines the [2Fe-2S] cluster pocket. Glutamate 491 is a binding site for Mg(2+). The active-site Proton acceptor is serine 517.

This sequence belongs to the IlvD/Edd family. In terms of assembly, homodimer. The cofactor is [2Fe-2S] cluster. It depends on Mg(2+) as a cofactor.

The enzyme catalyses (2R)-2,3-dihydroxy-3-methylbutanoate = 3-methyl-2-oxobutanoate + H2O. The catalysed reaction is (2R,3R)-2,3-dihydroxy-3-methylpentanoate = (S)-3-methyl-2-oxopentanoate + H2O. Its pathway is amino-acid biosynthesis; L-isoleucine biosynthesis; L-isoleucine from 2-oxobutanoate: step 3/4. It participates in amino-acid biosynthesis; L-valine biosynthesis; L-valine from pyruvate: step 3/4. Functions in the biosynthesis of branched-chain amino acids. Catalyzes the dehydration of (2R,3R)-2,3-dihydroxy-3-methylpentanoate (2,3-dihydroxy-3-methylvalerate) into 2-oxo-3-methylpentanoate (2-oxo-3-methylvalerate) and of (2R)-2,3-dihydroxy-3-methylbutanoate (2,3-dihydroxyisovalerate) into 2-oxo-3-methylbutanoate (2-oxoisovalerate), the penultimate precursor to L-isoleucine and L-valine, respectively. This is Dihydroxy-acid dehydratase from Escherichia coli O8 (strain IAI1).